Consider the following 505-residue polypeptide: Flagellin (505 aa).

This sequence belongs to the bacterial flagellin family.

Its subcellular location is the secreted. The protein localises to the bacterial flagellum. Its function is as follows. Flagellin is the subunit protein which polymerizes to form the filaments of bacterial flagella. This is Flagellin (fliC) from Salmonella derby.